The following is an 844-amino-acid chain: Bifunctional abietadiene synthase, chloroplastic (844 aa).

Residues 1–46 (QSIPHFSTTLNAGSSARKRRSLYLRWGKGSNKIIACVGEGATSVPY) constitute a chloroplast transit peptide. A substrate-binding site is contributed by lysine 245. Mg(2+) is bound by residues aspartate 378 and aspartate 380. The DXDD motif signature appears at 378–381 (DIDD). Lysine 465 contributes to the substrate binding site. Aspartate 597, aspartate 601, asparagine 741, threonine 745, and glutamate 749 together coordinate Mg(2+). The DDXXD motif motif lies at 597–601 (DDLYD).

It belongs to the terpene synthase family. Tpsd subfamily. As to quaternary structure, monomer. The cofactor is Mg(2+).

Its subcellular location is the plastid. The protein resides in the chloroplast. It carries out the reaction (2E,6E,10E)-geranylgeranyl diphosphate = (+)-copalyl diphosphate. It catalyses the reaction (+)-copalyl diphosphate = abieta-7,13-diene + diphosphate. The catalysed reaction is (+)-copalyl diphosphate = neoabietadiene + diphosphate. The enzyme catalyses (+)-copalyl diphosphate = abieta-8(14),12-diene + diphosphate. Its pathway is terpene metabolism; oleoresin biosynthesis. Its function is as follows. Involved in defensive oleoresin formation in conifers in response to insect attack or other injury. Involved in diterpene (C20) olefins biosynthesis. Bifunctional enzyme that catalyzes two sequential cyclizations of geranylgeranyl diphosphate (GGPP) to abietadiene. The copalyl diphosphate (CPP) intermediate diffuses freely between the 2 active sites in the enzyme. The protein is Bifunctional abietadiene synthase, chloroplastic (LAS) of Abies balsamea (Balsam fir).